Reading from the N-terminus, the 168-residue chain is Auxin-responsive protein IAA1 (168 aa).

The tract at residues 1 to 74 is disordered; it reads MEVTNGLNLK…NRKNNNNKNV (74 aa). An EAR-like (transcriptional repression) motif is present at residues 14-18; sequence LRLGL. Polar residues predominate over residues 23–34; the sequence is EEQQLELSCVRS. Residues 74-161 form the PB1 domain; that stretch reads VSYVKVSMDG…SCQKLRIMKG (88 aa).

This sequence belongs to the Aux/IAA family. As to quaternary structure, homodimers and heterodimers. Interacts with the auxin-responsive protein IAA2. Interacts with TPL. Post-translationally, phosphorylated by phytochrome A in vitro. Preferentially expressed in stems, leaves and flowers.

It is found in the nucleus. Functionally, aux/IAA proteins are short-lived transcriptional factors that function as repressors of early auxin response genes at low auxin concentrations. Repression is thought to result from the interaction with auxin response factors (ARFs), proteins that bind to the auxin-responsive promoter element (AuxRE). Formation of heterodimers with ARF proteins may alter their ability to modulate early auxin response genes expression. In Arabidopsis thaliana (Mouse-ear cress), this protein is Auxin-responsive protein IAA1 (IAA1).